The chain runs to 338 residues: Secretory carrier-associated membrane protein 1 (338 aa).

The interval methionine 1–methionine 64 is disordered. An N-acetylserine modification is found at serine 2. The residue at position 2 (serine 2) is a Phosphoserine. Residues serine 2–leucine 155 are Cytoplasmic-facing. Threonine 45 carries the phosphothreonine modification. Residues tryptophan 156–valine 176 form a helical membrane-spanning segment. Topologically, residues aspartate 177–alanine 181 are lumenal. Residues valine 182–tryptophan 202 form a helical membrane-spanning segment. Residues tyrosine 203 to phenylalanine 218 lie on the Cytoplasmic side of the membrane. Residues phenylalanine 219–phenylalanine 239 form a helical membrane-spanning segment. Over histidine 240 to glycine 261 the chain is Lumenal. A helical membrane pass occupies residues isoleucine 262–phenylalanine 282. Topologically, residues lysine 283–isoleucine 338 are cytoplasmic.

This sequence belongs to the SCAMP family. As to quaternary structure, interacts with SYNRG and ITSN1. Interacts with SLC9A7. In terms of tissue distribution, widely expressed, with highest expression in brain.

It is found in the golgi apparatus. The protein resides in the trans-Golgi network membrane. Its subcellular location is the recycling endosome membrane. In terms of biological role, functions in post-Golgi recycling pathways. Acts as a recycling carrier to the cell surface. The sequence is that of Secretory carrier-associated membrane protein 1 (SCAMP1) from Homo sapiens (Human).